Reading from the N-terminus, the 430-residue chain is Peptidoglycan DD-endopeptidase ShyA (430 aa).

A signal peptide spans 1 to 35 (MISKSIILRFSELSMRKKATLVGLPLLAVAAISSS). Residues His297, Asp301, and His378 each coordinate Zn(2+).

Belongs to the peptidase M23B family. Requires Zn(2+) as cofactor.

The protein localises to the periplasm. The protein operates within cell wall degradation; peptidoglycan degradation. With respect to regulation, reduced activity in 0.5 mM EDTA and a complete loss of activity at higher EDTA concentrations. The effect of EDTA can be reversed by addition of 1 mM ZnCl(2). Conformational switching between open (catalytically active) and closed (catalytically inactive) conformation of this protein is suggested mechanism of its regulation. The signal or inducer of the conformational shift to the open form unmasking the active site is currently not understood. Its function is as follows. Cell wall peptidoglycan (PG) DD-endopeptidase essential for cell growth and elongation. Hydrolyzes peptide cross-links which covalently connect adjacent PG strands probably to allow insertion of new glycans and thus cell wall expansion. Degrades purified whole PG sacculi in vitro. Releases predominantly short glycan chains from the PG. Cleaves D,D cross-linked muropeptides specifically preferring dimeric tetrapeptide-tetrapeptide (D44) substrates and has only little activity on dimeric tetrapeptide-pentapeptide (D45) substrates. Also converts more than 50% of tetrapeptide-tripeptide (D43) to product as well as more than 50% of D43M, which contains D-Met instead of D-Ala in the fourth position of the acceptor moiety. Cleaves the D,D bond between diaminopimelic acid (DAP) and D-Ala of the PG substrate in vitro. No cleavage of L,D bond connecting two DAP moieties. In Vibrio cholerae serotype O1 (strain ATCC 39315 / El Tor Inaba N16961), this protein is Peptidoglycan DD-endopeptidase ShyA.